A 192-amino-acid polypeptide reads, in one-letter code: Fe/S biogenesis protein NfuA (192 aa).

Residues Cys-150 and Cys-153 each coordinate [4Fe-4S] cluster.

Belongs to the NfuA family. Homodimer. It depends on [4Fe-4S] cluster as a cofactor.

Its function is as follows. Involved in iron-sulfur cluster biogenesis. Binds a 4Fe-4S cluster, can transfer this cluster to apoproteins, and thereby intervenes in the maturation of Fe/S proteins. Could also act as a scaffold/chaperone for damaged Fe/S proteins. The sequence is that of Fe/S biogenesis protein NfuA from Buchnera aphidicola subsp. Acyrthosiphon pisum (strain 5A).